A 298-amino-acid polypeptide reads, in one-letter code: Acetaldehyde dehydrogenase (298 aa).

6–9 (SGNI) lines the NAD(+) pocket. The active-site Acyl-thioester intermediate is Cys121. NAD(+) contacts are provided by residues 152 to 160 (SAGPGTRAN) and Asn271.

Belongs to the acetaldehyde dehydrogenase family.

The catalysed reaction is acetaldehyde + NAD(+) + CoA = acetyl-CoA + NADH + H(+). The polypeptide is Acetaldehyde dehydrogenase (Mycobacterium avium (strain 104)).